Here is a 477-residue protein sequence, read N- to C-terminus: Glycogen synthase (477 aa).

K15 is an ADP-alpha-D-glucose binding site.

Belongs to the glycosyltransferase 1 family. Bacterial/plant glycogen synthase subfamily.

The catalysed reaction is [(1-&gt;4)-alpha-D-glucosyl](n) + ADP-alpha-D-glucose = [(1-&gt;4)-alpha-D-glucosyl](n+1) + ADP + H(+). Its pathway is glycan biosynthesis; glycogen biosynthesis. In terms of biological role, synthesizes alpha-1,4-glucan chains using ADP-glucose. The protein is Glycogen synthase of Salmonella typhi.